A 182-amino-acid polypeptide reads, in one-letter code: Adenylate kinase isoenzyme 6 homolog (182 aa).

Residues 1–20 are disordered; it reads MATPETRRRPNILVTGSPGT. Residues Gly-19, Gly-21, Lys-22, Ser-23, and Thr-24 each contribute to the ATP site. The interval 39 to 62 is NMPbind; the sequence is EVSKEVRENNLQGDFDEQYNCHVL. An LID region spans residues 116-126; the sequence is SRGYSEFKIKE. Residue Arg-117 coordinates ATP.

It belongs to the adenylate kinase family. AK6 subfamily. As to quaternary structure, monomer and homodimer. Interacts with small ribosomal subunit protein uS11. Not a structural component of 43S pre-ribosomes, but transiently interacts with them by binding to uS11.

The protein localises to the cytoplasm. The protein resides in the nucleus. The catalysed reaction is AMP + ATP = 2 ADP. It carries out the reaction ATP + H2O = ADP + phosphate + H(+). Functionally, broad-specificity nucleoside monophosphate (NMP) kinase that catalyzes the reversible transfer of the terminal phosphate group between nucleoside triphosphates and monophosphates. Also has ATPase activity. Involved in the late cytoplasmic maturation steps of the 40S ribosomal particles, specifically 18S rRNA maturation. While NMP activity is not required for ribosome maturation, ATPase activity is. Associates transiently with small ribosomal subunit protein uS11. ATP hydrolysis breaks the interaction with uS11. May temporarily remove uS11 from the ribosome to enable a conformational change of the ribosomal RNA that is needed for the final maturation step of the small ribosomal subunit. Its NMP activity may have a role in nuclear energy homeostasis. AMP and dAMP are the preferred substrates, but CMP and TMP are also good substrates. ATP and dATP are the best phosphate donors. The sequence is that of Adenylate kinase isoenzyme 6 homolog from Caenorhabditis elegans.